A 499-amino-acid chain; its full sequence is Probable cytosol aminopeptidase (499 aa).

The Mn(2+) site is built by Lys-269 and Asp-274. The active site involves Lys-281. Residues Asp-292, Asp-351, and Glu-353 each coordinate Mn(2+). Arg-355 is an active-site residue.

The protein belongs to the peptidase M17 family. Mn(2+) is required as a cofactor.

It is found in the cytoplasm. It catalyses the reaction Release of an N-terminal amino acid, Xaa-|-Yaa-, in which Xaa is preferably Leu, but may be other amino acids including Pro although not Arg or Lys, and Yaa may be Pro. Amino acid amides and methyl esters are also readily hydrolyzed, but rates on arylamides are exceedingly low.. It carries out the reaction Release of an N-terminal amino acid, preferentially leucine, but not glutamic or aspartic acids.. In terms of biological role, presumably involved in the processing and regular turnover of intracellular proteins. Catalyzes the removal of unsubstituted N-terminal amino acids from various peptides. This chain is Probable cytosol aminopeptidase, found in Actinobacillus pleuropneumoniae serotype 7 (strain AP76).